The chain runs to 807 residues: Glycerol-3-phosphate acyltransferase (807 aa).

The HXXXXD motif signature appears at 308-313; it reads CHRSHM.

This sequence belongs to the GPAT/DAPAT family.

It is found in the cell inner membrane. The enzyme catalyses sn-glycerol 3-phosphate + an acyl-CoA = a 1-acyl-sn-glycero-3-phosphate + CoA. It functions in the pathway phospholipid metabolism; CDP-diacylglycerol biosynthesis; CDP-diacylglycerol from sn-glycerol 3-phosphate: step 1/3. The protein is Glycerol-3-phosphate acyltransferase of Shewanella baltica (strain OS223).